The chain runs to 61 residues: DNA-directed RNA polymerase subunit Rpo6 (61 aa).

It belongs to the archaeal Rpo6/eukaryotic RPB6 RNA polymerase subunit family. In terms of assembly, part of the RNA polymerase complex.

The protein resides in the cytoplasm. The catalysed reaction is RNA(n) + a ribonucleoside 5'-triphosphate = RNA(n+1) + diphosphate. DNA-dependent RNA polymerase (RNAP) catalyzes the transcription of DNA into RNA using the four ribonucleoside triphosphates as substrates. The protein is DNA-directed RNA polymerase subunit Rpo6 of Thermoplasma volcanium (strain ATCC 51530 / DSM 4299 / JCM 9571 / NBRC 15438 / GSS1).